Reading from the N-terminus, the 144-residue chain is Peptide methionine sulfoxide reductase MsrB (144 aa).

The MsrB domain occupies Gln-5–Tyr-128. Cys-117 serves as the catalytic Nucleophile.

The protein belongs to the MsrB Met sulfoxide reductase family.

The enzyme catalyses L-methionyl-[protein] + [thioredoxin]-disulfide + H2O = L-methionyl-(R)-S-oxide-[protein] + [thioredoxin]-dithiol. The sequence is that of Peptide methionine sulfoxide reductase MsrB from Streptococcus agalactiae serotype Ia (strain ATCC 27591 / A909 / CDC SS700).